The chain runs to 465 residues: Na(+)-translocating NADH-quinone reductase subunit A (465 aa).

It belongs to the NqrA family. Composed of six subunits; NqrA, NqrB, NqrC, NqrD, NqrE and NqrF.

The catalysed reaction is a ubiquinone + n Na(+)(in) + NADH + H(+) = a ubiquinol + n Na(+)(out) + NAD(+). Functionally, NQR complex catalyzes the reduction of ubiquinone-1 to ubiquinol by two successive reactions, coupled with the transport of Na(+) ions from the cytoplasm to the periplasm. NqrA to NqrE are probably involved in the second step, the conversion of ubisemiquinone to ubiquinol. The chain is Na(+)-translocating NADH-quinone reductase subunit A from Chlamydia trachomatis serovar A (strain ATCC VR-571B / DSM 19440 / HAR-13).